Reading from the N-terminus, the 163-residue chain is NADH-quinone oxidoreductase subunit I (163 aa).

4Fe-4S ferredoxin-type domains are found at residues 53–83 (LRRY…IEAG) and 94–123 (TRYD…EGPN). [4Fe-4S] cluster contacts are provided by Cys63, Cys66, Cys69, Cys73, Cys103, Cys106, Cys109, and Cys113.

The protein belongs to the complex I 23 kDa subunit family. In terms of assembly, NDH-1 is composed of 14 different subunits. Subunits NuoA, H, J, K, L, M, N constitute the membrane sector of the complex. The cofactor is [4Fe-4S] cluster.

It is found in the cell inner membrane. The catalysed reaction is a quinone + NADH + 5 H(+)(in) = a quinol + NAD(+) + 4 H(+)(out). In terms of biological role, NDH-1 shuttles electrons from NADH, via FMN and iron-sulfur (Fe-S) centers, to quinones in the respiratory chain. The immediate electron acceptor for the enzyme in this species is believed to be ubiquinone. Couples the redox reaction to proton translocation (for every two electrons transferred, four hydrogen ions are translocated across the cytoplasmic membrane), and thus conserves the redox energy in a proton gradient. This Parvibaculum lavamentivorans (strain DS-1 / DSM 13023 / NCIMB 13966) protein is NADH-quinone oxidoreductase subunit I.